The primary structure comprises 1072 residues: PWWP domain-containing protein 1 (1072 aa).

Residues 21 to 133 are disordered; the sequence is DSIQDPKVTP…ADEKELDLGL (113 aa). The segment covering 25–38 has biased composition (low complexity); the sequence is DPKVTPDDTVVDSS. The segment covering 66-77 has biased composition (basic and acidic residues); sequence RVLESERSEKDG. The span at 96-128 shows a compositional bias: acidic residues; it reads KDDESSEVKEEEEEEDGSDDQSSELGSEADEKE. Residues 173–234 enclose the PWWP domain; sequence VGDLVWGKVK…PAELIPFEPN (62 aa). Residues 365 to 387 form a disordered region; sequence KSPRSSVSTLEPHNRAPPRAPLS. Polar residues predominate over residues 366–375; sequence SPRSSVSTLE. The Nuclear localization signal 1 signature appears at 402-409; the sequence is SKKPTKVK. 4 disordered regions span residues 486 to 619, 681 to 738, 871 to 931, and 944 to 973; these read AIPG…GEAG, LSVS…KTNQ, KAEP…NGNR, and ENSSKANTEPPQVTMTLNRNSGPSSSSSSV. The segment covering 498 to 526 has biased composition (basic and acidic residues); sequence SLDEEKGLAEKSKERMEERAAVLPEHGKS. Positions 545 to 568 are enriched in polar residues; that stretch reads AGSSLQPLLESHTSASEGKSSTGS. 3 consecutive short sequence motifs (nuclear localization signal) follow at residues 596-603, 705-712, and 733-740; these read KKKKKEPD, VKRTEDPS, and LKKTNQLK. Basic and acidic residues predominate over residues 706-729; it reads KRTEDPSKAGKKRLSSDRQDEIPS. Over residues 871-880 the composition is skewed to basic and acidic residues; that stretch reads KAEPREPENT. A compositionally biased stretch (pro residues) spans 897 to 906; that stretch reads LHQPTLPPPN. Residues 921-930 are compositionally biased toward low complexity; it reads SSSSNNGNGN. Residues 947-966 are compositionally biased toward polar residues; sequence SKANTEPPQVTMTLNRNSGP.

It belongs to the PDP family. As to quaternary structure, interacts with MSI4/FVE. Component of the PRC2 (polycomb repressive complex 2) complex which regulates histone methylation on histone H3K27.

Its subcellular location is the nucleus. Functionally, together with PDP2, PDP3 and PDP6, interacts with MSI4/FVE and MSI5 to suppress FLC, MAF4 and MAF5 expression by regulating the function of the PRC2 complex and modulating H3K27me3 level, thereby promoting flowering. The chain is PWWP domain-containing protein 1 from Arabidopsis thaliana (Mouse-ear cress).